Here is a 246-residue protein sequence, read N- to C-terminus: tRNA (cytidine/uridine-2'-O-)-methyltransferase TrmJ (246 aa).

Residues 79-81, Gly-114, Ile-134, and 141-143 contribute to the S-adenosyl-L-methionine site; these read TSA and SSL.

The protein belongs to the class IV-like SAM-binding methyltransferase superfamily. RNA methyltransferase TrmH family. Homodimer.

Its subcellular location is the cytoplasm. The enzyme catalyses cytidine(32) in tRNA + S-adenosyl-L-methionine = 2'-O-methylcytidine(32) in tRNA + S-adenosyl-L-homocysteine + H(+). The catalysed reaction is uridine(32) in tRNA + S-adenosyl-L-methionine = 2'-O-methyluridine(32) in tRNA + S-adenosyl-L-homocysteine + H(+). Catalyzes the formation of 2'O-methylated cytidine (Cm32) or 2'O-methylated uridine (Um32) at position 32 in tRNA. The sequence is that of tRNA (cytidine/uridine-2'-O-)-methyltransferase TrmJ (trmJ) from Escherichia coli O1:K1 / APEC.